The chain runs to 291 residues: ATP synthase gamma chain (291 aa).

It belongs to the ATPase gamma chain family. As to quaternary structure, F-type ATPases have 2 components, CF(1) - the catalytic core - and CF(0) - the membrane proton channel. CF(1) has five subunits: alpha(3), beta(3), gamma(1), delta(1), epsilon(1). CF(0) has three main subunits: a, b and c.

The protein resides in the cell membrane. In terms of biological role, produces ATP from ADP in the presence of a proton gradient across the membrane. The gamma chain is believed to be important in regulating ATPase activity and the flow of protons through the CF(0) complex. This Streptococcus pyogenes serotype M49 (strain NZ131) protein is ATP synthase gamma chain.